We begin with the raw amino-acid sequence, 200 residues long: 3-isopropylmalate dehydratase small subunit (200 aa).

It belongs to the LeuD family. LeuD type 1 subfamily. In terms of assembly, heterodimer of LeuC and LeuD.

The enzyme catalyses (2R,3S)-3-isopropylmalate = (2S)-2-isopropylmalate. It functions in the pathway amino-acid biosynthesis; L-leucine biosynthesis; L-leucine from 3-methyl-2-oxobutanoate: step 2/4. Functionally, catalyzes the isomerization between 2-isopropylmalate and 3-isopropylmalate, via the formation of 2-isopropylmaleate. The chain is 3-isopropylmalate dehydratase small subunit from Campylobacter jejuni subsp. jejuni serotype O:6 (strain 81116 / NCTC 11828).